We begin with the raw amino-acid sequence, 336 residues long: Inositol 2-dehydrogenase (336 aa).

This sequence belongs to the Gfo/Idh/MocA family. In terms of assembly, homotetramer.

It carries out the reaction myo-inositol + NAD(+) = scyllo-inosose + NADH + H(+). Involved in the oxidation of myo-inositol (MI) to 2-keto-myo-inositol (2KMI or 2-inosose). This chain is Inositol 2-dehydrogenase, found in Salmonella agona (strain SL483).